A 337-amino-acid polypeptide reads, in one-letter code: Ribosomal RNA small subunit methyltransferase H (337 aa).

Residues 33 to 35 (AGH), Asp53, Asp101, and Gln108 contribute to the S-adenosyl-L-methionine site.

The protein belongs to the methyltransferase superfamily. RsmH family.

It is found in the cytoplasm. The catalysed reaction is cytidine(1402) in 16S rRNA + S-adenosyl-L-methionine = N(4)-methylcytidine(1402) in 16S rRNA + S-adenosyl-L-homocysteine + H(+). Its function is as follows. Specifically methylates the N4 position of cytidine in position 1402 (C1402) of 16S rRNA. The chain is Ribosomal RNA small subunit methyltransferase H from Herpetosiphon aurantiacus (strain ATCC 23779 / DSM 785 / 114-95).